Here is a 98-residue protein sequence, read N- to C-terminus: NADH-ubiquinone oxidoreductase chain 4L (98 aa).

3 helical membrane passes run 1 to 21 (MVLIKLNIIVAFMLALSGVLI), 36 to 56 (MMLSLFIFMAAMITHFHMFSI), and 61 to 81 (LILLVFSACEAGVGLALLVSI).

Belongs to the complex I subunit 4L family.

Its subcellular location is the mitochondrion membrane. The catalysed reaction is a ubiquinone + NADH + 5 H(+)(in) = a ubiquinol + NAD(+) + 4 H(+)(out). In terms of biological role, core subunit of the mitochondrial membrane respiratory chain NADH dehydrogenase (Complex I) which catalyzes electron transfer from NADH through the respiratory chain, using ubiquinone as an electron acceptor. Part of the enzyme membrane arm which is embedded in the lipid bilayer and involved in proton translocation. This chain is NADH-ubiquinone oxidoreductase chain 4L (MT-ND4L), found in Didelphis virginiana (North American opossum).